A 726-amino-acid chain; its full sequence is F-box protein COS111 (726 aa).

The F-box domain occupies 143-194; that stretch reads FADINCLPEEIICRIIANLNDADSQRNCLLVSQEWSECAKRIIYKDVKFTST. The disordered stretch occupies residues 276–295; that stretch reads RSRTRRSSDASSMNSSVFSH. Positions 284–295 are enriched in low complexity; the sequence is DASSMNSSVFSH.

Its function is as follows. F-box protein probably involved in ubiquitin conjugation pathway. This is F-box protein COS111 (COS111) from Kluyveromyces lactis (strain ATCC 8585 / CBS 2359 / DSM 70799 / NBRC 1267 / NRRL Y-1140 / WM37) (Yeast).